Here is a 168-residue protein sequence, read N- to C-terminus: Crossover junction endodeoxyribonuclease RuvC (168 aa).

Active-site residues include aspartate 7, glutamate 64, and aspartate 136. Residues aspartate 7, glutamate 64, and aspartate 136 each coordinate Mg(2+).

It belongs to the RuvC family. In terms of assembly, homodimer which binds Holliday junction (HJ) DNA. The HJ becomes 2-fold symmetrical on binding to RuvC with unstacked arms; it has a different conformation from HJ DNA in complex with RuvA. In the full resolvosome a probable DNA-RuvA(4)-RuvB(12)-RuvC(2) complex forms which resolves the HJ. It depends on Mg(2+) as a cofactor.

It is found in the cytoplasm. The catalysed reaction is Endonucleolytic cleavage at a junction such as a reciprocal single-stranded crossover between two homologous DNA duplexes (Holliday junction).. Functionally, the RuvA-RuvB-RuvC complex processes Holliday junction (HJ) DNA during genetic recombination and DNA repair. Endonuclease that resolves HJ intermediates. Cleaves cruciform DNA by making single-stranded nicks across the HJ at symmetrical positions within the homologous arms, yielding a 5'-phosphate and a 3'-hydroxyl group; requires a central core of homology in the junction. The consensus cleavage sequence is 5'-(A/T)TT(C/G)-3'. Cleavage occurs on the 3'-side of the TT dinucleotide at the point of strand exchange. HJ branch migration catalyzed by RuvA-RuvB allows RuvC to scan DNA until it finds its consensus sequence, where it cleaves and resolves the cruciform DNA. The chain is Crossover junction endodeoxyribonuclease RuvC from Polynucleobacter necessarius subsp. necessarius (strain STIR1).